An 86-amino-acid polypeptide reads, in one-letter code: Large ribosomal subunit protein bL31 (86 aa).

Positions 16, 18, 38, and 41 each coordinate Zn(2+).

The protein belongs to the bacterial ribosomal protein bL31 family. Type A subfamily. In terms of assembly, part of the 50S ribosomal subunit. Requires Zn(2+) as cofactor.

Functionally, binds the 23S rRNA. The chain is Large ribosomal subunit protein bL31 from Acidothermus cellulolyticus (strain ATCC 43068 / DSM 8971 / 11B).